A 364-amino-acid polypeptide reads, in one-letter code: Aminomethyltransferase (364 aa).

The protein belongs to the GcvT family. The glycine cleavage system is composed of four proteins: P, T, L and H.

It carries out the reaction N(6)-[(R)-S(8)-aminomethyldihydrolipoyl]-L-lysyl-[protein] + (6S)-5,6,7,8-tetrahydrofolate = N(6)-[(R)-dihydrolipoyl]-L-lysyl-[protein] + (6R)-5,10-methylene-5,6,7,8-tetrahydrofolate + NH4(+). In terms of biological role, the glycine cleavage system catalyzes the degradation of glycine. The chain is Aminomethyltransferase from Shigella dysenteriae serotype 1 (strain Sd197).